The sequence spans 383 residues: Cytochrome b (383 aa).

4 consecutive transmembrane segments (helical) span residues 32–52, 76–98, 113–133, and 179–199; these read FGSL…FLAM, WLIR…CHIA, TWSI…LGYV, and FFSL…AHMI. 2 residues coordinate heme b: H82 and H96. Positions 183 and 197 each coordinate heme b. H202 provides a ligand contact to a ubiquinone. 4 consecutive transmembrane segments (helical) span residues 225–245, 289–309, 321–341, and 348–368; these read FIFK…IFVC, LLGV…PLTD, LMKL…WIGA, and YLEV…FIVP.

It belongs to the cytochrome b family. Fungal cytochrome b-c1 complex contains 10 subunits; 3 respiratory subunits, 2 core proteins and 5 low-molecular weight proteins. Cytochrome b-c1 complex is a homodimer. It depends on heme b as a cofactor.

The protein localises to the mitochondrion inner membrane. Its function is as follows. Component of the ubiquinol-cytochrome c reductase complex (complex III or cytochrome b-c1 complex) that is part of the mitochondrial respiratory chain. The b-c1 complex mediates electron transfer from ubiquinol to cytochrome c. Contributes to the generation of a proton gradient across the mitochondrial membrane that is then used for ATP synthesis. The polypeptide is Cytochrome b (cob) (Schizophyllum commune (Split gill fungus)).